The primary structure comprises 339 residues: Erlin-2 (339 aa).

At 1-3 (MAQ) the chain is on the cytoplasmic side. Residues 4–24 (LGAVVAVASSFFCASLFSAVH) form a helical membrane-spanning segment. Over 25–339 (KIEEGHIGVY…EPLETATKEN (315 aa)) the chain is Lumenal. N-linked (GlcNAc...) asparagine glycosylation is present at asparagine 106. The interaction with ERLIN1 stretch occupies residues 177–309 (EAIRRNYELM…DIPNMFMDSA (133 aa)). Lysine 267 is subject to N6-acetyllysine.

The protein belongs to the band 7/mec-2 family. Forms a heteromeric complex with ERLIN1. In complex with ERLIN1, interacts with RNF170. Interacts with activated ITPR1, independently of the degree of ITPR1 polyubiquitination. Interacts with SCAP, INSIG1, SREBF1 and SREBF2 under cholesterol sufficiency conditions; indicative for an association with the SCAP-SREBP-INSIG complex. Probably part of an AMFR/gp78 and INSIG1-containing ubiquitin ligase complex involved in ERAD of HMGCR. Interacts with TMUB1; TMUB1 bridges the association with AMFR. Interacts with SYVN1 and RNF139. Interacts with TMEM259. Interacts with TMEM41B. Deubiquitinated by USP25; leading to stabilization. In terms of tissue distribution, ubiquitous.

Its subcellular location is the endoplasmic reticulum membrane. In terms of biological role, component of the ERLIN1/ERLIN2 complex which mediates the endoplasmic reticulum-associated degradation (ERAD) of inositol 1,4,5-trisphosphate receptors (IP3Rs) such as ITPR1. Promotes sterol-accelerated ERAD of HMGCR probably implicating an AMFR/gp78-containing ubiquitin ligase complex. Involved in regulation of cellular cholesterol homeostasis by regulation the SREBP signaling pathway. May promote ER retention of the SCAP-SREBF complex. This chain is Erlin-2 (ERLIN2), found in Homo sapiens (Human).